A 475-amino-acid polypeptide reads, in one-letter code: Exodeoxyribonuclease 7 large subunit (475 aa).

Belongs to the XseA family. Heterooligomer composed of large and small subunits.

The protein resides in the cytoplasm. It carries out the reaction Exonucleolytic cleavage in either 5'- to 3'- or 3'- to 5'-direction to yield nucleoside 5'-phosphates.. Bidirectionally degrades single-stranded DNA into large acid-insoluble oligonucleotides, which are then degraded further into small acid-soluble oligonucleotides. The polypeptide is Exodeoxyribonuclease 7 large subunit (Bartonella henselae (strain ATCC 49882 / DSM 28221 / CCUG 30454 / Houston 1) (Rochalimaea henselae)).